Here is a 620-residue protein sequence, read N- to C-terminus: Coenzyme F420-dependent sulfite reductase (620 aa).

The 4Fe-4S ferredoxin-type 1 domain occupies L6 to R35. Residues C15, C18, C21, C25, C428, C434, C468, C472, C495, C498, C501, C505, C524, C527, C530, and C534 each coordinate [4Fe-4S] cluster. C472 is a siroheme binding site. 4Fe-4S ferredoxin-type domains lie at K486–E515 and N520–E544.

Belongs to the nitrite and sulfite reductase 4Fe-4S domain family. It depends on [4Fe-4S] cluster as a cofactor. The cofactor is siroheme.

The enzyme catalyses 3 oxidized coenzyme F420-(gamma-L-Glu)(n) + hydrogen sulfide + 3 H2O + 2 H(+) = 3 reduced coenzyme F420-(gamma-L-Glu)(n) + sulfite. Its function is as follows. Catalyzes the reduction of sulfite to sulfide using reduced F420 as the electron source. Involved in sulfite detoxification and assimilation. Cannot use NADH or NADPH. This Methanocaldococcus jannaschii (strain ATCC 43067 / DSM 2661 / JAL-1 / JCM 10045 / NBRC 100440) (Methanococcus jannaschii) protein is Coenzyme F420-dependent sulfite reductase.